The sequence spans 184 residues: Ribosome-recycling factor (184 aa).

The tract at residues 141–161 (KKNDKAISEDDQRKGQDDVQK) is disordered.

It belongs to the RRF family.

The protein localises to the cytoplasm. In terms of biological role, responsible for the release of ribosomes from messenger RNA at the termination of protein biosynthesis. May increase the efficiency of translation by recycling ribosomes from one round of translation to another. In Solidesulfovibrio magneticus (strain ATCC 700980 / DSM 13731 / RS-1) (Desulfovibrio magneticus), this protein is Ribosome-recycling factor.